Reading from the N-terminus, the 406-residue chain is Cysteine desulfurase (406 aa).

At Lys226 the chain carries N6-(pyridoxal phosphate)lysine. Catalysis depends on Cys364, which acts as the Cysteine persulfide intermediate.

It belongs to the class-V pyridoxal-phosphate-dependent aminotransferase family. Csd subfamily. Homodimer. Interacts with SufE and the SufBCD complex composed of SufB, SufC and SufD. The interaction with SufE is required to mediate the direct transfer of the sulfur atom from the S-sulfanylcysteine. Requires pyridoxal 5'-phosphate as cofactor.

The protein resides in the cytoplasm. The catalysed reaction is (sulfur carrier)-H + L-cysteine = (sulfur carrier)-SH + L-alanine. The enzyme catalyses L-selenocysteine + AH2 = hydrogenselenide + L-alanine + A + H(+). It participates in cofactor biosynthesis; iron-sulfur cluster biosynthesis. In terms of biological role, cysteine desulfurases mobilize the sulfur from L-cysteine to yield L-alanine, an essential step in sulfur metabolism for biosynthesis of a variety of sulfur-containing biomolecules. Component of the suf operon, which is activated and required under specific conditions such as oxidative stress and iron limitation. Acts as a potent selenocysteine lyase in vitro, that mobilizes selenium from L-selenocysteine. Selenocysteine lyase activity is however unsure in vivo. The polypeptide is Cysteine desulfurase (Escherichia coli O45:K1 (strain S88 / ExPEC)).